A 475-amino-acid polypeptide reads, in one-letter code: Bifunctional protein HldE (475 aa).

Residues M1–T318 are ribokinase. N195 to E198 provides a ligand contact to ATP. D264 is a catalytic residue. The segment at M344–R475 is cytidylyltransferase.

In the N-terminal section; belongs to the carbohydrate kinase PfkB family. It in the C-terminal section; belongs to the cytidylyltransferase family. As to quaternary structure, homodimer.

The catalysed reaction is D-glycero-beta-D-manno-heptose 7-phosphate + ATP = D-glycero-beta-D-manno-heptose 1,7-bisphosphate + ADP + H(+). It catalyses the reaction D-glycero-beta-D-manno-heptose 1-phosphate + ATP + H(+) = ADP-D-glycero-beta-D-manno-heptose + diphosphate. It functions in the pathway nucleotide-sugar biosynthesis; ADP-L-glycero-beta-D-manno-heptose biosynthesis; ADP-L-glycero-beta-D-manno-heptose from D-glycero-beta-D-manno-heptose 7-phosphate: step 1/4. Its pathway is nucleotide-sugar biosynthesis; ADP-L-glycero-beta-D-manno-heptose biosynthesis; ADP-L-glycero-beta-D-manno-heptose from D-glycero-beta-D-manno-heptose 7-phosphate: step 3/4. The protein operates within bacterial outer membrane biogenesis; LOS core biosynthesis. Its function is as follows. Catalyzes the phosphorylation of D-glycero-D-manno-heptose 7-phosphate at the C-1 position to selectively form D-glycero-beta-D-manno-heptose-1,7-bisphosphate. Catalyzes the ADP transfer from ATP to D-glycero-beta-D-manno-heptose 1-phosphate, yielding ADP-D-glycero-beta-D-manno-heptose. This is Bifunctional protein HldE from Haemophilus ducreyi (strain 35000HP / ATCC 700724).